The sequence spans 326 residues: Regulation of nuclear pre-mRNA domain-containing protein 1B (326 aa).

Ser-2 is modified (N-acetylserine). Positions 2–133 constitute a CID domain; it reads SSFSESALEK…QLKLSMEDSK (132 aa). The disordered stretch occupies residues 127–149; that stretch reads LSMEDSKSPPPKATEEKKSLKRT. A compositionally biased stretch (basic and acidic residues) spans 128–144; it reads SMEDSKSPPPKATEEKK. Phosphoserine is present on residues Ser-132 and Ser-134. Tyr-161 carries the post-translational modification Phosphotyrosine. A phosphoserine mark is found at Ser-166 and Ser-299.

Belongs to the UPF0400 (RTT103) family. In terms of assembly, homodimer. May form a heterodimer with RPRD1A. Associates with RPAP2. Associates with the RNA polymerase II complex. As to expression, preferentially expressed in a range of tumor tissues including colon, lung, liver, breast, prostate, stomach, uterine endometrium and cervical cancers with higher levels in tumors than in adjacent non-tumor tissue (at protein level).

It is found in the nucleus. Functionally, interacts with phosphorylated C-terminal heptapeptide repeat domain (CTD) of the largest RNA polymerase II subunit POLR2A, and participates in dephosphorylation of the CTD by RPAP2. Transcriptional regulator which enhances expression of CCND1. Promotes binding of RNA polymerase II to the CCDN1 promoter and to the termination region before the poly-A site but decreases its binding after the poly-A site. Prevents RNA polymerase II from reading through the 3' end termination site and may allow it to be recruited back to the promoter through promotion of the formation of a chromatin loop. Also enhances the transcription of a number of other cell cycle-related genes including CDK2, CDK4, CDK6 and cyclin-E but not CDKN1A, CDKN1B or cyclin-A. Promotes cell proliferation. The chain is Regulation of nuclear pre-mRNA domain-containing protein 1B (RPRD1B) from Homo sapiens (Human).